Here is a 394-residue protein sequence, read N- to C-terminus: Subtilisin-like protease 4 (394 aa).

A signal peptide spans 1–17; sequence CLKTLSVFLAAFAAADA. The propeptide occupies 18-116; that stretch reads RAVFKTQGHK…VEQDQVVRIS (99 aa). Residues 36–115 enclose the Inhibitor I9 domain; sequence YIVVMKDGVS…YVEQDQVVRI (80 aa). Asn100 is a glycosylation site (N-linked (GlcNAc...) asparagine). The 269-residue stretch at 126–394 folds into the Peptidase S8 domain; the sequence is SWGLGRVSHR…STTNRLLYNG (269 aa). Active-site charge relay system residues include Asp158 and His189. Asn250 and Asn306 each carry an N-linked (GlcNAc...) asparagine glycan. Ser344 functions as the Charge relay system in the catalytic mechanism.

It belongs to the peptidase S8 family.

It localises to the secreted. Its function is as follows. Secreted subtilisin-like serine protease with keratinolytic activity that contributes to pathogenicity. This Trichophyton equinum (Horse ringworm fungus) protein is Subtilisin-like protease 4 (SUB4).